The chain runs to 203 residues: Ribosomal RNA small subunit methyltransferase G (203 aa).

Residues Gly73, Leu78, 124-125 (VE), and Arg139 each bind S-adenosyl-L-methionine.

The protein belongs to the methyltransferase superfamily. RNA methyltransferase RsmG family.

It is found in the cytoplasm. It catalyses the reaction guanosine(527) in 16S rRNA + S-adenosyl-L-methionine = N(7)-methylguanosine(527) in 16S rRNA + S-adenosyl-L-homocysteine. Specifically methylates the N7 position of guanine in position 527 of 16S rRNA. The chain is Ribosomal RNA small subunit methyltransferase G from Haemophilus influenzae (strain PittEE).